We begin with the raw amino-acid sequence, 79 residues long: Sec-independent protein translocase protein TatA (79 aa).

A helical transmembrane segment spans residues 1–21 (MGGISIWQLLIIALIVVLLFG). The tract at residues 43-79 (MSSEEDKKALEDTEAAKTAQTTQQATEKKPESNKEQA) is disordered. Over residues 46-57 (EEDKKALEDTEA) the composition is skewed to basic and acidic residues. The span at 58-67 (AKTAQTTQQA) shows a compositional bias: low complexity. The segment covering 68-79 (TEKKPESNKEQA) has biased composition (basic and acidic residues).

Belongs to the TatA/E family. The Tat system comprises two distinct complexes: a TatABC complex, containing multiple copies of TatA, TatB and TatC subunits, and a separate TatA complex, containing only TatA subunits. Substrates initially bind to the TatABC complex, which probably triggers association of the separate TatA complex to form the active translocon.

It localises to the cell inner membrane. In terms of biological role, part of the twin-arginine translocation (Tat) system that transports large folded proteins containing a characteristic twin-arginine motif in their signal peptide across membranes. TatA could form the protein-conducting channel of the Tat system. This Shewanella putrefaciens (strain CN-32 / ATCC BAA-453) protein is Sec-independent protein translocase protein TatA.